A 281-amino-acid chain; its full sequence is MSRKEIYEPRPRYPDGYNGNRAVKKSLSVLSLDNMKSTLSGLFAPLKLDEEQAEDDESLSSYEDYASRQIDDDLKKQRKKGITFIDYSSLITFFCKLCVIFGLGFVFTYLAEQIVQDAKLPLLTVNLKSWKFEPPWPAIFGFVAVILGLSYRRMDTKYPLGAAPLRPSQSSKWQWISRYLAAFATLLLSMKKLLFISNSHSIVALVASSASIWYIFDRSRNGIILSTITSVLGSILYYNLVDTSKIELNGVEFPEIQFRLWIPMILFSASTIVGNAGRLLF.

Residues 1–93 (MSRKEIYEPR…FIDYSSLITF (93 aa)) are Cytoplasmic-facing. Residue Ser28 is modified to Phosphoserine. Residues 94–120 (FCKLCVIFGLGFVFTYLAEQIVQDAKL) form a helical membrane-spanning segment. The Lumenal portion of the chain corresponds to 121–134 (PLLTVNLKSWKFEP). A helical membrane pass occupies residues 135–159 (PWPAIFGFVAVILGLSYRRMDTKYP). Residues 160-170 (LGAAPLRPSQS) are Cytoplasmic-facing. A helical transmembrane segment spans residues 171–186 (SKWQWISRYLAAFATL). The Lumenal segment spans residues 187–189 (LLS). Residues 190–215 (MKKLLFISNSHSIVALVASSASIWYI) form a helical membrane-spanning segment. Over 216 to 221 (FDRSRN) the chain is Cytoplasmic. A helical membrane pass occupies residues 222–256 (GIILSTITSVLGSILYYNLVDTSKIELNGVEFPEI). Over 257–260 (QFRL) the chain is Lumenal. The helical transmembrane segment at 261–281 (WIPMILFSASTIVGNAGRLLF) threads the bilayer.

This sequence belongs to the INSIG family.

The protein resides in the endoplasmic reticulum membrane. This chain is INSIG family protein (ins1), found in Schizosaccharomyces pombe (strain 972 / ATCC 24843) (Fission yeast).